The chain runs to 132 residues: Small ribosomal subunit protein uS8 (132 aa).

The protein belongs to the universal ribosomal protein uS8 family. As to quaternary structure, part of the 30S ribosomal subunit. Contacts proteins S5 and S12.

One of the primary rRNA binding proteins, it binds directly to 16S rRNA central domain where it helps coordinate assembly of the platform of the 30S subunit. This chain is Small ribosomal subunit protein uS8, found in Streptococcus agalactiae serotype V (strain ATCC BAA-611 / 2603 V/R).